A 654-amino-acid polypeptide reads, in one-letter code: MLQINSRLAVIDGWLVDTVKRKPINFRSPEVRLLLPNDDDYKKLSQQNLVDWTRLKKDSNSVLVGVKSMELFKHIKLVLREFFLLEDGRIILKRIRSKLRYKVVKKLTCKCCRLYLPKWGTVYIHPMLKDKEKPLAGVCEFSLDVNPDREYPLIEINVSHQYIIIEGFLLYLNERRLYRWNDNNLRSQVGLTKWAHLRKTYNPVSLDILYSLNSNFYFVKDDLLFQLLGKRVFVKFCKVMENGKCGKAPLWYRVKRTTTAKATHIAYAISNSTAPDSFKSKNNDYRFIVREKPIVENTISNLDYSDIKKQQFTEAEVVKRKISADISQIENVHTQFNSQKEKNNIRVNKVSSEVLDQISKFPVSRVTLLLMSAGQDKNYIELVEELARRLEKICIEKTTQSLEEIRDTFQANPEMQASFDKEYYQSIEEYKITLELIKEDLLITLIKQMENMWAAEKKFSTEEEYVSPRFLVADGFLIDLAEEKPINPKDPRLLTLLKDHQRAMIDQMNLVKWNDFKKYQDPIPLKAKTLFKFCKQIKKKFLRGADFKLHTLPTEANLKYEPERMTVLCSCVPILLDDQTVQYLYDDSIIPEFEATSSYATKQSKCGRKMSLQMEPDLLFQEAIRRMRHLTAYDVLRRNYIAAFEELYMGNCND.

Residues 322–654 (ISADISQIEN…EELYMGNCND (333 aa)) form a sufficient for interaction with SIR4 region. An ORC interacting region (OIR) region spans residues 449–587 (MENMWAAEKK…DQTVQYLYDD (139 aa)).

In terms of assembly, interacts (via OIR domain) with ORC1 (via BAH domain). Interacts with SIR4. Interacts with CAC1.

The protein resides in the nucleus. It is found in the chromosome. It localises to the centromere. Involved in the establishment, but not the maintenance, of heterochromatic silencing at the cryptic mating-type loci HMR and HML. Is recruited by interacting with the ORC1 subunit of the origin recognition complex (ORC), which binds to HML-I or HMR-E silencers, DNA elements that direct the formation of silent chromatin at the mating-type loci. Establishes transcriptional silencing by recruiting the three other SIR proteins, SIR2, SIR3, and SIR4, that function directly in silenced chromatin and establish repression. Also found in centromeric chromatin. Binds to and helps retain CAC1, a subunit of chromatin assembly factor I (CAF-I) at centromeric loci independent on the other SIR proteins. The chain is Regulatory protein SIR1 (SIR1) from Saccharomyces cerevisiae (strain ATCC 204508 / S288c) (Baker's yeast).